We begin with the raw amino-acid sequence, 332 residues long: Packaging enzyme P4 (332 aa).

The involved in the regulation and mechanisms of transcription, replication and genome packaging stretch occupies residues 111–138 (RWPSEGIYSGVTALMGATGSGKSITLNE). 126–133 (GATGSGKS) is an ATP binding site. The interval 310-332 (LERGSVDTDDRNSAPRRGANFSL) is disordered. A compositionally biased stretch (basic and acidic residues) spans 313–322 (GSVDTDDRNS).

Homohexamer. Part of the packaging complex composed of RDRP, P4 and P7.

It localises to the virion. It catalyses the reaction a ribonucleoside 5'-triphosphate + H2O = a ribonucleoside 5'-diphosphate + phosphate + H(+). Functionally, packaging motor with helicase and translocase activities. Part of the packaging complex that packages the viral RNA segments, replicate them into a double-stranded form and transcribe them. is one of the structural proteins of the polyhedral procapsid, which is responsible for genomic replication and transcription. Displays single-stranded RNA-stimulated NTPase activity. The polypeptide is Packaging enzyme P4 (P4) (Pseudomonas savastanoi pv. phaseolicola (Pseudomonas syringae pv. phaseolicola)).